The primary structure comprises 862 residues: Rho guanine nucleotide exchange factor 7 (862 aa).

The region spanning 1 to 112 is the Calponin-homology (CH) domain; sequence MNSAEQTVTW…SLVTLNKVTA (112 aa). S132, S155, S164, S228, and S236 each carry phosphoserine. Positions 163 to 222 constitute an SH3 domain; sequence NSQLVVRAKFNFQQTNEDELSFSKGDVIHVTRVEEGGWWEGTHNGRTGWFPSNYVREIKP. Residues 250–430 enclose the DH domain; the sequence is YYNVVLQNIL…KNLSAQCQEV (181 aa). The region spanning 452 to 557 is the PH domain; it reads DIKTLGSVTY…WVEHLQKQTK (106 aa). The residue at position 497 (S497) is a Phosphoserine. Disordered regions lie at residues 559 to 591, 657 to 679, and 728 to 748; these read TSVS…ADSK, KTMK…EFAV, and DQSS…EPSD. The span at 572 to 585 shows a compositional bias: polar residues; that stretch reads PSHTLPSHPLTPSS. The span at 657-669 shows a compositional bias: basic residues; sequence KTMKKLLPKRKPE. The span at 670-679 shows a compositional bias: basic and acidic residues; sequence RKPSDEEFAV. Position 673 is a phosphoserine (S673). A compositionally biased stretch (low complexity) spans 731–744; that stretch reads SLDSLGRRSSLSRL. S776 is modified (phosphoserine). A coiled-coil region spans residues 804-854; the sequence is KSLVDTVYALKDEVQELRQDNKKMKKSLEEEQRARKDLEKLVRKVLKNMND.

In terms of assembly, interacts with PAK kinases through the SH3 domain. Interacts with unphosphorylated PAK1. Interacts with ITCH. Interacts with SCRIB; interaction is direct and may play a role in regulation of apoptosis. Interacts with GIT1 and TGFB1I1. Interacts with FRMPD4 (via N-terminus). Interacts with CaMK1. Interacts with BIN2. Interacts with PTK2/FAK1 and RAC1. Interacts with PARVB. Interacts with YWHAZ. Interacts (via PH domain) with NOX1 (via FAD-binding FR-type domain). Phosphorylated on Ser-673 by CaMK1; enhancement of GEF activity and downstream activation of RAC1. Phosphorylated by PTK2/FAK1; this promotes interaction with RAC1. As to expression, seems to be expressed in the central nervous system. Isoform B, isoform C and isoform E are expressed with highest levels in brain and testis.

It localises to the cell junction. Its subcellular location is the focal adhesion. It is found in the cell projection. The protein resides in the ruffle. The protein localises to the cytoplasm. It localises to the cell cortex. Its subcellular location is the lamellipodium. Acts as a RAC1 guanine nucleotide exchange factor (GEF) and can induce membrane ruffling. May function as a positive regulator of apoptosis. Functions in cell migration, attachment and cell spreading. Promotes targeting of RAC1 to focal adhesions. Downstream of NMDA receptors and CaMKK-CaMK1 signaling cascade, promotes the formation of spines and synapses in hippocampal neurons. This chain is Rho guanine nucleotide exchange factor 7 (Arhgef7), found in Mus musculus (Mouse).